The sequence spans 217 residues: Ribonuclease HII (217 aa).

Residues Ser-27 to Cys-216 form the RNase H type-2 domain. 3 residues coordinate a divalent metal cation: Asp-33, Glu-34, and Asp-126.

The protein belongs to the RNase HII family. Requires Mn(2+) as cofactor. The cofactor is Mg(2+).

The protein localises to the cytoplasm. The enzyme catalyses Endonucleolytic cleavage to 5'-phosphomonoester.. Endonuclease that specifically degrades the RNA of RNA-DNA hybrids. This Chlamydia trachomatis serovar D (strain ATCC VR-885 / DSM 19411 / UW-3/Cx) protein is Ribonuclease HII (rnhB).